We begin with the raw amino-acid sequence, 129 residues long: uncharacterized protein (129 aa).

This is an uncharacterized protein from Oryza sativa subsp. indica (Rice).